Reading from the N-terminus, the 284-residue chain is Shikimate dehydrogenase (NADP(+)) (284 aa).

Shikimate is bound by residues 19 to 21 and Thr-66; that span reads SFS. Lys-70 (proton acceptor) is an active-site residue. An NADP(+)-binding site is contributed by Asp-82. 2 residues coordinate shikimate: Asn-91 and Asp-106. Residues 130 to 134 and Ile-226 contribute to the NADP(+) site; that span reads GSGGS. Position 228 (Tyr-228) interacts with shikimate. An NADP(+)-binding site is contributed by Gly-249.

It belongs to the shikimate dehydrogenase family. Homodimer.

The enzyme catalyses shikimate + NADP(+) = 3-dehydroshikimate + NADPH + H(+). It participates in metabolic intermediate biosynthesis; chorismate biosynthesis; chorismate from D-erythrose 4-phosphate and phosphoenolpyruvate: step 4/7. Its function is as follows. Involved in the biosynthesis of the chorismate, which leads to the biosynthesis of aromatic amino acids. Catalyzes the reversible NADPH linked reduction of 3-dehydroshikimate (DHSA) to yield shikimate (SA). This chain is Shikimate dehydrogenase (NADP(+)), found in Methanococcus vannielii (strain ATCC 35089 / DSM 1224 / JCM 13029 / OCM 148 / SB).